Consider the following 29-residue polypeptide: Glucagon (29 aa).

Belongs to the glucagon family.

It localises to the secreted. Functionally, glucagon plays a key role in glucose metabolism and homeostasis. Regulates blood glucose by increasing gluconeogenesis and decreasing glycolysis. The chain is Glucagon (GCG) from Struthio camelus (Common ostrich).